A 253-amino-acid chain; its full sequence is Chloride intracellular channel protein 4 (253 aa).

A2 bears the N-acetylalanine mark. The required for insertion into the membrane stretch occupies residues A2 to P101. S4 is subject to Phosphoserine. An N6-acetyllysine modification is found at K24. The helical transmembrane segment at F37–V57 threads the bilayer. A GST C-terminal domain is found at N81–Y244. An N6-acetyllysine modification is found at K130. S132, S167, and S236 each carry phosphoserine. At Y244 the chain carries Phosphotyrosine.

This sequence belongs to the chloride channel CLIC family. In terms of assembly, monomer. Interacts with HRH3.

It localises to the cytoplasm. It is found in the cytoskeleton. The protein resides in the microtubule organizing center. Its subcellular location is the centrosome. The protein localises to the cytoplasmic vesicle membrane. It localises to the nucleus. It is found in the cell membrane. The protein resides in the mitochondrion. Its subcellular location is the cell junction. It catalyses the reaction chloride(in) = chloride(out). The catalysed reaction is thiocyanate(in) = thiocyanate(out). It carries out the reaction nitrate(in) = nitrate(out). The enzyme catalyses iodide(out) = iodide(in). It catalyses the reaction bromide(in) = bromide(out). The catalysed reaction is fluoride(in) = fluoride(out). It carries out the reaction choline(out) = choline(in). Its function is as follows. In the soluble state, catalyzes glutaredoxin-like thiol disulfide exchange reactions with reduced glutathione as electron donor. Can insert into membranes and form voltage-dependent multi-ion conductive channels. Membrane insertion seems to be redox-regulated and may occur only under oxidizing conditions. Has alternate cellular functions like a potential role in angiogenesis or in maintaining apical-basolateral membrane polarity during mitosis and cytokinesis. Could also promote endothelial cell proliferation and regulate endothelial morphogenesis (tubulogenesis). Promotes cell-surface expression of HRH3. The protein is Chloride intracellular channel protein 4 (CLIC4) of Pongo abelii (Sumatran orangutan).